The following is a 108-amino-acid chain: MRAFVALFCTLVAFATVICDIQEHGHSYLTRNVTVENGACIFERNTLPDGETKALHDPCVIATCYAARREVNATLCRNFGVDPGCRFHWRNDGVYPQCCPTQVCDGTD.

Positions 1-19 are cleaved as a signal peptide; it reads MRAFVALFCTLVAFATVIC. 4 disulfides stabilise this stretch: Cys-40–Cys-64, Cys-59–Cys-98, Cys-76–Cys-99, and Cys-85–Cys-104.

The protein belongs to the CirpT family. Expressed in salivary glands.

Its subcellular location is the secreted. Complement inhibitor. Prevents complement-mediated activation of C5 by sterically preventing direct binding of C5 to its convertase (binding with domains MG4 and MG5). Binds C5 at a different binding site than the other tick complement inhibitors OmCI and RaCI3, and the drug eculizumab. Inhibits the complement in human, rat and guinea pig, and also shows a reduced inhibition in rabbit and pig. This chain is Complement inhibitor CirpT4, found in Amblyomma americanum (Lone star tick).